A 573-amino-acid polypeptide reads, in one-letter code: Adenine deaminase 2 (573 aa).

It belongs to the metallo-dependent hydrolases superfamily. Adenine deaminase family. Mn(2+) is required as a cofactor.

The enzyme catalyses adenine + H2O + H(+) = hypoxanthine + NH4(+). The polypeptide is Adenine deaminase 2 (Shouchella clausii (strain KSM-K16) (Alkalihalobacillus clausii)).